The following is a 799-amino-acid chain: Sodium- and chloride-dependent glycine transporter 2 (799 aa).

The segment at M1–F64 is disordered. Topologically, residues M1–D201 are cytoplasmic. The segment covering P40–A57 has biased composition (low complexity). Residue S58 is modified to Phosphoserine. At T59 the chain carries Phosphothreonine. S86 carries the phosphoserine modification. 3 helical membrane passes run F202–L222, A230–L249, and G273–I293. Positions 208, 210, 211, and 215 each coordinate Na(+). The Extracellular portion of the chain corresponds to C294 to R395. An intrachain disulfide couples C313 to C322. 4 N-linked (GlcNAc...) asparagine glycosylation sites follow: N345, N355, N360, and N366. Helical transmembrane passes span W396–A414, V423–I440, I476–Y493, L505–I526, and L559–L578. Na(+) contacts are provided by S479, N511, L576, and D579. 4 consecutive transmembrane segments (helical) span residues V606–T624, S640–L660, V681–Y700, and L719–I737. Residues K738–C799 lie on the Cytoplasmic side of the membrane.

This sequence belongs to the sodium:neurotransmitter symporter (SNF) (TC 2.A.22) family. SLC6A5 subfamily. In terms of processing, N-glycosylated. In terms of tissue distribution, specifically expressed in spinal cord, brain stem, and to a lesser extent in the cerebellum.

It localises to the cell membrane. It carries out the reaction glycine(out) + chloride(out) + 3 Na(+)(out) = glycine(in) + chloride(in) + 3 Na(+)(in). In terms of biological role, sodium- and chloride-dependent glycine transporter. Terminates the action of glycine by its high affinity sodium-dependent reuptake into presynaptic terminals. May be responsible for the termination of neurotransmission at strychnine-sensitive glycinergic synapses. In Rattus norvegicus (Rat), this protein is Sodium- and chloride-dependent glycine transporter 2 (Slc6a5).